A 92-amino-acid polypeptide reads, in one-letter code: Small ribosomal subunit protein uS19 (92 aa).

This sequence belongs to the universal ribosomal protein uS19 family.

Functionally, protein S19 forms a complex with S13 that binds strongly to the 16S ribosomal RNA. The polypeptide is Small ribosomal subunit protein uS19 (Paramagnetospirillum magneticum (strain ATCC 700264 / AMB-1) (Magnetospirillum magneticum)).